The sequence spans 243 residues: Cyclin-dependent kinase 20 (243 aa).

In terms of domain architecture, Protein kinase spans 4-243 (YCILGRIGEG…IHLSCRFLSV (240 aa)). Residues 10–18 (IGEGAHGIV) and Lys33 each bind ATP. The Proton acceptor role is filled by Asp127.

It belongs to the protein kinase superfamily. CMGC Ser/Thr protein kinase family. CDC2/CDKX subfamily. In terms of assembly, monomer. Interacts with TBC1D32 and MAK.

The protein resides in the nucleus. The protein localises to the cytoplasm. It localises to the cell projection. It is found in the cilium. It carries out the reaction L-seryl-[protein] + ATP = O-phospho-L-seryl-[protein] + ADP + H(+). The catalysed reaction is L-threonyl-[protein] + ATP = O-phospho-L-threonyl-[protein] + ADP + H(+). In terms of biological role, required for high-level Shh responses in the developing neural tube. Together with TBC1D32, controls the structure of the primary cilium by coordinating assembly of the ciliary membrane and axoneme, allowing GLI2 to be properly activated in response to SHH signaling. Involved in cell growth. Activates CDK2, a kinase involved in the control of the cell cycle, by phosphorylating residue 'Thr-160'. This is Cyclin-dependent kinase 20 (CDK20) from Macaca mulatta (Rhesus macaque).